A 72-amino-acid chain; its full sequence is Translation initiation factor IF-1 (72 aa).

Positions 1–72 (MAKEDCIEME…TKGRIKFRSK (72 aa)) constitute an S1-like domain.

This sequence belongs to the IF-1 family. In terms of assembly, component of the 30S ribosomal translation pre-initiation complex which assembles on the 30S ribosome in the order IF-2 and IF-3, IF-1 and N-formylmethionyl-tRNA(fMet); mRNA recruitment can occur at any time during PIC assembly.

The protein localises to the cytoplasm. Functionally, one of the essential components for the initiation of protein synthesis. Stabilizes the binding of IF-2 and IF-3 on the 30S subunit to which N-formylmethionyl-tRNA(fMet) subsequently binds. Helps modulate mRNA selection, yielding the 30S pre-initiation complex (PIC). Upon addition of the 50S ribosomal subunit IF-1, IF-2 and IF-3 are released leaving the mature 70S translation initiation complex. The sequence is that of Translation initiation factor IF-1 from Francisella tularensis subsp. novicida (strain U112).